A 151-amino-acid polypeptide reads, in one-letter code: Ribosomal RNA large subunit methyltransferase H (151 aa).

Residues Gly-100 and 119-124 (LSKMTF) contribute to the S-adenosyl-L-methionine site.

This sequence belongs to the RNA methyltransferase RlmH family. As to quaternary structure, homodimer.

The protein localises to the cytoplasm. It carries out the reaction pseudouridine(1915) in 23S rRNA + S-adenosyl-L-methionine = N(3)-methylpseudouridine(1915) in 23S rRNA + S-adenosyl-L-homocysteine + H(+). Its function is as follows. Specifically methylates the pseudouridine at position 1915 (m3Psi1915) in 23S rRNA. The protein is Ribosomal RNA large subunit methyltransferase H of Thermotoga maritima (strain ATCC 43589 / DSM 3109 / JCM 10099 / NBRC 100826 / MSB8).